Consider the following 944-residue polypeptide: Thyroid peroxidase (944 aa).

Positions 1–30 are cleaved as a signal peptide; that stretch reads MVGLVPAGSAWGGRALAVLGVTLLVALARG. Residues 31-858 are Extracellular-facing; that stretch reads LLPFFLGGRD…SGRLPKASLV (828 aa). A glycan (N-linked (GlcNAc...) asparagine) is linked at Asn141. Cys154 and Cys170 are joined by a disulfide. Asp250 lines the heme b pocket. The active-site Proton acceptor is His251. Residue Asp252 coordinates Ca(2+). Cystine bridges form between Cys271–Cys281 and Cys275–Cys295. Asn316 carries N-linked (GlcNAc...) asparagine glycosylation. Ca(2+)-binding residues include Thr330, Phe332, Asp334, and Ser336. N-linked (GlcNAc...) asparagine glycosylation is present at Asn351. Residues Glu408 and His503 each coordinate heme b. 7 disulfides stabilise this stretch: Cys606-Cys663, Cys704-Cys729, Cys750-Cys790, Cys776-Cys802, Cys808-Cys822, Cys816-Cys831, and Cys833-Cys846. Asn623 carries an N-linked (GlcNAc...) asparagine glycan. The region spanning 748–804 is the Sushi domain; the sequence is DACGLPDSLDNGDVVLCGEAGRRVLVFSCRHGFKLQGPEQVACSPRGGAVRAPVCRD. The 44-residue stretch at 804 to 847 folds into the EGF-like; calcium-binding domain; the sequence is DINECEDASHPPCHGSARCRNTKGGFRCECTDPAVLGEDGTTCV. A helical transmembrane segment spans residues 859-879; sequence SIALGIVLVVGLAGLTWTLVC. Over 880–944 the chain is Cytoplasmic; that stretch reads RWAHAGRKAS…RSHVAQGSPA (65 aa). Positions 895-944 are disordered; it reads LGGRGAPPPGRGAGQDGASGSLVPPLGPQGRTRAVDPTSSRSHVAQGSPA. The span at 931–944 shows a compositional bias: polar residues; sequence PTSSRSHVAQGSPA.

This sequence belongs to the peroxidase family. XPO subfamily. In terms of assembly, interacts with DUOX1, DUOX2 and CYBA. The cofactor is Ca(2+). Heme b serves as cofactor. Post-translationally, heme is covalently bound through a H(2)O(2)-dependent autocatalytic process. Heme insertion is important for the delivery of protein at the cell surface. In terms of processing, cleaved in its N-terminal part.

It is found in the membrane. The enzyme catalyses 2 iodide + H2O2 + 2 H(+) = diiodine + 2 H2O. It catalyses the reaction [thyroglobulin]-L-tyrosine + iodide + H2O2 + H(+) = [thyroglobulin]-3-iodo-L-tyrosine + 2 H2O. It carries out the reaction [thyroglobulin]-3-iodo-L-tyrosine + iodide + H2O2 + H(+) = [thyroglobulin]-3,5-diiodo-L-tyrosine + 2 H2O. The catalysed reaction is 2 [thyroglobulin]-3,5-diiodo-L-tyrosine + H2O2 = [thyroglobulin]-L-thyroxine + [thyroglobulin]-dehydroalanine + 2 H2O. The enzyme catalyses [thyroglobulin]-3-iodo-L-tyrosine + [thyroglobulin]-3,5-diiodo-L-tyrosine + H2O2 = [thyroglobulin]-3,3',5-triiodo-L-thyronine + [thyroglobulin]-dehydroalanine + 2 H2O. The protein operates within hormone biosynthesis; thyroid hormone biosynthesis. Functionally, iodination and coupling of the hormonogenic tyrosines in thyroglobulin to yield the thyroid hormones T(3) and T(4). This chain is Thyroid peroxidase (TPO), found in Canis lupus familiaris (Dog).